Consider the following 317-residue polypeptide: Melanocyte-stimulating hormone receptor (317 aa).

The Extracellular portion of the chain corresponds to 1–37 (MPVQGSQRRLLGSLNSTPTATPKLGLAANQTGAQCLE). N-linked (GlcNAc...) asparagine glycosylation is present at asparagine 29. A helical transmembrane segment spans residues 38–63 (VSIPDGLFLSLGLVSLVENVLVVAAI). Residues 64–72 (ARNRNLHSP) lie on the Cytoplasmic side of the membrane. Residues 73–93 (MYCFICCLALSDLLVSGSNML) traverse the membrane as a helical segment. At 94–118 (ETAVILLLEAGALAARAAVVQQLDN) the chain is on the extracellular side. Residues 119-140 (VIDVITCSSMLSSLCFLGAIAM) traverse the membrane as a helical segment. Residues 141 to 163 (DRYISIFYALRYHSIVTLPRARG) lie on the Cytoplasmic side of the membrane. The helical transmembrane segment at 164–183 (VVAAIWVASILFSTLFIAYY) threads the bilayer. Topologically, residues 184 to 191 (DHVAVLLC) are extracellular. A helical transmembrane segment spans residues 192 to 211 (LVVFFLAMLVLMAVLYVHML). Over 212-240 (ARACQHAQGIAQLHKRQRPAHQGVGLKGA) the chain is Cytoplasmic. The helical transmembrane segment at 241 to 266 (ATLTILLGIFFLCWGPFFLHLTLIVL) threads the bilayer. Over 267-279 (CPQHPTCSCIFKN) the chain is Extracellular. Residues 280–300 (FNLFLALIICNAIIDPLIYAF) form a helical membrane-spanning segment. Topologically, residues 301 to 317 (RSQELRRTLKKVLLCSW) are cytoplasmic. Cysteine 315 carries the S-palmitoyl cysteine lipid modification.

This sequence belongs to the G-protein coupled receptor 1 family. In terms of assembly, interacts with MGRN1, but does not undergo MGRN1-mediated ubiquitination; this interaction competes with GNAS-binding and thus inhibits agonist-induced cAMP production. Interacts with OPN3; the interaction results in a decrease in MC1R-mediated cAMP signaling and ultimately a decrease in melanin production in melanocytes.

The protein localises to the cell membrane. In terms of biological role, receptor for MSH (alpha, beta and gamma) and ACTH. The activity of this receptor is mediated by G proteins which activate adenylate cyclase. Mediates melanogenesis, the production of eumelanin (black/brown) and phaeomelanin (red/yellow), via regulation of cAMP signaling in melanocytes. This is Melanocyte-stimulating hormone receptor (MC1R) from Presbytis comata (Grizzled leaf monkey).